The sequence spans 387 residues: Gamma-butyrobetaine dioxygenase (387 aa).

Residues Cys-38, Cys-40, Cys-43, and His-82 each coordinate Zn(2+). His-202, Asp-204, and His-347 together coordinate Fe cation. Ser-351 bears the Phosphoserine mark.

It belongs to the gamma-BBH/TMLD family. Requires Fe(2+) as cofactor. The cofactor is L-ascorbate. As to expression, highly expressed in kidney; moderately expressed in liver; very low expression in brain.

It is found in the cytoplasm. It catalyses the reaction 4-(trimethylamino)butanoate + 2-oxoglutarate + O2 = carnitine + succinate + CO2. The protein operates within amine and polyamine biosynthesis; carnitine biosynthesis. Functionally, catalyzes the formation of L-carnitine from gamma-butyrobetaine. In Homo sapiens (Human), this protein is Gamma-butyrobetaine dioxygenase (BBOX1).